The primary structure comprises 425 residues: RNA polymerase II-associated factor 1 homolog (425 aa).

Residues 152–174 adopt a coiled-coil conformation; that stretch reads KKNQQVEDMYRDKQSQIDAINKT. The disordered stretch occupies residues 331–425; that stretch reads SRKSKLTLTY…KEPTVDSDSD (95 aa). Basic and acidic residues-rich tracts occupy residues 344-380 and 393-402; these read SELE…KEEG and DKPQKSRSDS.

The protein belongs to the PAF1 family. In terms of assembly, component of the PAF1 complex which consists of at least cdc-73, ctr-9, leo-1, pafo-1 and rtfo-1.

It localises to the nucleus. In terms of biological role, component of the PAF1 complex which is a multifunctional complex involved in transcription initiation via genetic interactions with TATA-binding proteins, elongation and transcription-coupled histone modification. In Caenorhabditis elegans, this protein is RNA polymerase II-associated factor 1 homolog.